Consider the following 491-residue polypeptide: Protein DETOXIFICATION 20 (491 aa).

The next 12 helical transmembrane spans lie at 37 to 57 (LWVV…VSMV), 75 to 95 (ITFT…AGAL), 120 to 140 (IVLT…GPIL), 156 to 176 (LALW…CQMF), 185 to 205 (IISY…WLLV), 214 to 234 (GAMT…LLYV), 265 to 285 (GGML…TGNL), 296 to 316 (AICI…LAAV), 337 to 357 (LIAV…FLFL), 381 to 401 (LLAF…VAIG), 413 to 433 (LACY…VVGL), and 438 to 458 (VWIG…VMTL).

This sequence belongs to the multi antimicrobial extrusion (MATE) (TC 2.A.66.1) family.

The protein localises to the membrane. This is Protein DETOXIFICATION 20 from Arabidopsis thaliana (Mouse-ear cress).